A 328-amino-acid chain; its full sequence is Tetraacyldisaccharide 4'-kinase (328 aa).

55–62 (TAGGNGKT) serves as a coordination point for ATP.

The protein belongs to the LpxK family.

It catalyses the reaction a lipid A disaccharide + ATP = a lipid IVA + ADP + H(+). The protein operates within glycolipid biosynthesis; lipid IV(A) biosynthesis; lipid IV(A) from (3R)-3-hydroxytetradecanoyl-[acyl-carrier-protein] and UDP-N-acetyl-alpha-D-glucosamine: step 6/6. Functionally, transfers the gamma-phosphate of ATP to the 4'-position of a tetraacyldisaccharide 1-phosphate intermediate (termed DS-1-P) to form tetraacyldisaccharide 1,4'-bis-phosphate (lipid IVA). The protein is Tetraacyldisaccharide 4'-kinase of Shigella boydii serotype 4 (strain Sb227).